The following is a 607-amino-acid chain: Homologous recombination OB-fold protein (607 aa).

Disordered regions lie at residues 25-49, 84-108, 196-308, and 531-581; these read LRPN…SYPA, ISSS…SGRQ, PWPS…TTVT, and LKPP…DDLD. Polar residues-rich tracts occupy residues 27-49 and 92-108; these read PNSS…SYPA and QQRM…SGRQ. Residue Ser30 is modified to Phosphoserine. Arg281 bears the Asymmetric dimethylarginine mark. Over residues 295–308 the composition is skewed to low complexity; it reads SPFSTPRSTSTTVT. Acidic residues predominate over residues 570-581; sequence PEEELPEADDLD.

In terms of assembly, interacts with MCM8; this interaction is necessary for MCM8-MCM9 helicase complex recruitment to DNA damage sites. Interacts with RPA1; this interaction associates HROB with the RPA complex.

The protein resides in the nucleus. Its subcellular location is the chromosome. In terms of biological role, DNA-binding protein involved in homologous recombination that acts by recruiting the MCM8-MCM9 helicase complex to sites of DNA damage to promote DNA repair synthesis. This chain is Homologous recombination OB-fold protein, found in Rattus norvegicus (Rat).